The sequence spans 457 residues: Argininosuccinate lyase (457 aa).

This sequence belongs to the lyase 1 family. Argininosuccinate lyase subfamily.

The protein resides in the cytoplasm. It carries out the reaction 2-(N(omega)-L-arginino)succinate = fumarate + L-arginine. It functions in the pathway amino-acid biosynthesis; L-arginine biosynthesis; L-arginine from L-ornithine and carbamoyl phosphate: step 3/3. The sequence is that of Argininosuccinate lyase from Escherichia coli O1:K1 / APEC.